A 182-amino-acid chain; its full sequence is MFANFRNCFKIKNSRLIYDNINKCLLTKEETNQLLKFIHLKWKPAKDQVQISFSRSSGPGGQNVNKLNTKVIVNLPFKQLESCIPMFLINHFKTCEMLRNYRIQNGIKIYSQKTRSQHKNIEDALNKISDLLNKSAETLYVPDTPPEKIARISILKKESNEKRLSEKKYKQKKKTQRRITMD.

Residues 161–182 (EKRLSEKKYKQKKKTQRRITMD) form a disordered region. The segment covering 169-182 (YKQKKKTQRRITMD) has biased composition (basic residues).

It belongs to the prokaryotic/mitochondrial release factor family.

The protein resides in the mitochondrion. Its function is as follows. Has a role in meiosis. This is Meiotically up-regulated gene 82 protein (mug82) from Schizosaccharomyces pombe (strain 972 / ATCC 24843) (Fission yeast).